Reading from the N-terminus, the 229-residue chain is Non-structural protein P8 (229 aa).

Positions 14–26 (MKHNQDRVEELSL) are CCM-I. The tract at residues 94–116 (IKRHVNEQILPKLKSDLSELKKK) is CCM-III. The next 2 membrane-spanning stretches (helical) occupy residues 119–139 (IIHT…VCTL) and 162–182 (SLNP…MVCA). The interval 185-198 (ERALNQQIDMIKKE) is CCM-II.

It belongs to the orbivirus NS3 family. In terms of assembly, forms homooligomers via coiled-coil motif. Interacts with host OPTN; this interaction inhibits innate immune response.

It localises to the host cell membrane. The protein resides in the host Golgi apparatus. In terms of biological role, plays a role in the inhibition of host innate immune response. Interacts with host OPTN and thus inhibits the recruitment of TBK1 to the host Golgi apparatus. In turn, downstream partner IRF3 cannot be activated and IFN-beta production is impaired. Facilitates viral particle release either by increasing plasma membrane permeability through a viroporin-like activity or by viral budding. The polypeptide is Non-structural protein P8 (Segment-10) (Bluetongue virus 10 (isolate USA) (BTV 10)).